Here is a 57-residue protein sequence, read N- to C-terminus: Protein GnsB (57 aa).

Belongs to the gns family.

In terms of biological role, overexpression increases levels of unsaturated fatty acids and suppresses both the temperature-sensitive fabA6 mutation and cold-sensitive secG null mutation. The chain is Protein GnsB (gnsB) from Escherichia coli (strain K12).